The chain runs to 149 residues: D-aminoacyl-tRNA deacylase (149 aa).

Positions 137-138 (GP) match the Gly-cisPro motif, important for rejection of L-amino acids motif.

Belongs to the DTD family. In terms of assembly, homodimer.

The protein localises to the cytoplasm. The enzyme catalyses glycyl-tRNA(Ala) + H2O = tRNA(Ala) + glycine + H(+). The catalysed reaction is a D-aminoacyl-tRNA + H2O = a tRNA + a D-alpha-amino acid + H(+). Its function is as follows. An aminoacyl-tRNA editing enzyme that deacylates mischarged D-aminoacyl-tRNAs. Also deacylates mischarged glycyl-tRNA(Ala), protecting cells against glycine mischarging by AlaRS. Acts via tRNA-based rather than protein-based catalysis; rejects L-amino acids rather than detecting D-amino acids in the active site. By recycling D-aminoacyl-tRNA to D-amino acids and free tRNA molecules, this enzyme counteracts the toxicity associated with the formation of D-aminoacyl-tRNA entities in vivo and helps enforce protein L-homochirality. The protein is D-aminoacyl-tRNA deacylase of Thioalkalivibrio sulfidiphilus (strain HL-EbGR7).